Here is a 161-residue protein sequence, read N- to C-terminus: N5-carboxyaminoimidazole ribonucleotide mutase (161 aa).

Residues Ser9, Asp12, and Arg39 each coordinate substrate.

The protein belongs to the AIR carboxylase family. Class I subfamily.

The catalysed reaction is 5-carboxyamino-1-(5-phospho-D-ribosyl)imidazole + H(+) = 5-amino-1-(5-phospho-D-ribosyl)imidazole-4-carboxylate. It participates in purine metabolism; IMP biosynthesis via de novo pathway; 5-amino-1-(5-phospho-D-ribosyl)imidazole-4-carboxylate from 5-amino-1-(5-phospho-D-ribosyl)imidazole (N5-CAIR route): step 2/2. Functionally, catalyzes the conversion of N5-carboxyaminoimidazole ribonucleotide (N5-CAIR) to 4-carboxy-5-aminoimidazole ribonucleotide (CAIR). The chain is N5-carboxyaminoimidazole ribonucleotide mutase from Aliivibrio fischeri (strain ATCC 700601 / ES114) (Vibrio fischeri).